The sequence spans 346 residues: tRNA N6-adenosine threonylcarbamoyltransferase (346 aa).

Fe cation contacts are provided by histidine 111 and histidine 115. Substrate contacts are provided by residues 134–138, aspartate 167, glycine 180, and asparagine 279; that span reads LVSGG. Aspartate 307 provides a ligand contact to Fe cation.

Belongs to the KAE1 / TsaD family. Fe(2+) is required as a cofactor.

Its subcellular location is the cytoplasm. It carries out the reaction L-threonylcarbamoyladenylate + adenosine(37) in tRNA = N(6)-L-threonylcarbamoyladenosine(37) in tRNA + AMP + H(+). Functionally, required for the formation of a threonylcarbamoyl group on adenosine at position 37 (t(6)A37) in tRNAs that read codons beginning with adenine. Is involved in the transfer of the threonylcarbamoyl moiety of threonylcarbamoyl-AMP (TC-AMP) to the N6 group of A37, together with TsaE and TsaB. TsaD likely plays a direct catalytic role in this reaction. The sequence is that of tRNA N6-adenosine threonylcarbamoyltransferase from Burkholderia ambifaria (strain MC40-6).